Consider the following 81-residue polypeptide: Photosystem I iron-sulfur center (81 aa).

4Fe-4S ferredoxin-type domains lie at 2-31 (SHAV…MVPW) and 39-68 (IAAS…IRVY). [4Fe-4S] cluster-binding residues include Cys11, Cys14, Cys17, Cys21, Cys48, Cys51, Cys54, and Cys58.

The cyanobacterial PSI reaction center is composed of one copy each of PsaA,B,C,D,E,F,I,J,K,L,M and X, and forms trimeric complexes. [4Fe-4S] cluster serves as cofactor.

The protein resides in the cellular thylakoid membrane. The enzyme catalyses reduced [plastocyanin] + hnu + oxidized [2Fe-2S]-[ferredoxin] = oxidized [plastocyanin] + reduced [2Fe-2S]-[ferredoxin]. In terms of biological role, apoprotein for the two 4Fe-4S centers FA and FB of photosystem I (PSI); essential for photochemical activity. FB is the terminal electron acceptor of PSI, donating electrons to ferredoxin. The C-terminus interacts with PsaA/B/D and helps assemble the protein into the PSI complex. Required for binding of PsaD and PsaE to PSI. PSI is a plastocyanin/cytochrome c6-ferredoxin oxidoreductase, converting photonic excitation into a charge separation, which transfers an electron from the donor P700 chlorophyll pair to the spectroscopically characterized acceptors A0, A1, FX, FA and FB in turn. The sequence is that of Photosystem I iron-sulfur center from Prochlorococcus marinus (strain MIT 9303).